We begin with the raw amino-acid sequence, 863 residues long: Cilia- and flagella-associated protein 58 (863 aa).

2 coiled-coil regions span residues 107 to 600 (TVKE…NERD) and 631 to 815 (QSQY…KQVF). The interval 836–863 (GPSLLDQLPGGSGTGSGGMATGGGVGMS) is disordered. The segment covering 845–863 (GGSGTGSGGMATGGGVGMS) has biased composition (gly residues).

It belongs to the CFAP58 family.

It localises to the cell projection. The protein resides in the cilium. The protein localises to the flagellum. The protein is Cilia- and flagella-associated protein 58 of Chlamydomonas reinhardtii (Chlamydomonas smithii).